The primary structure comprises 806 residues: Glycerol-3-phosphate acyltransferase (806 aa).

The HXXXXD motif signature appears at 305–310; it reads CHRSHM.

The protein belongs to the GPAT/DAPAT family.

It is found in the cell inner membrane. It catalyses the reaction sn-glycerol 3-phosphate + an acyl-CoA = a 1-acyl-sn-glycero-3-phosphate + CoA. Its pathway is phospholipid metabolism; CDP-diacylglycerol biosynthesis; CDP-diacylglycerol from sn-glycerol 3-phosphate: step 1/3. The polypeptide is Glycerol-3-phosphate acyltransferase (Salmonella paratyphi A (strain ATCC 9150 / SARB42)).